Here is a 281-residue protein sequence, read N- to C-terminus: UPF0046 protein C25E10.12 (281 aa).

It belongs to the UPF0046 family.

This Caenorhabditis elegans protein is UPF0046 protein C25E10.12.